A 342-amino-acid chain; its full sequence is Surface presentation of antigens protein SpaS (342 aa).

The next 6 helical transmembrane spans lie at 28 to 48 (LTTVVIILVGTFTIISFFSLS), 70 to 90 (FFAVVIVFFKIIGFPLFFCVL), 133 to 153 (EFFKSILLLIILALTTYFFWI), 158 to 178 (IIFSQVFSSVDGLYLIWGRLF), 181 to 201 (IILFFLAFSILVIILDFVIEF), and 260 to 280 (HIAIGIYFNPEIAPAPFISLI).

This sequence belongs to the type III secretion exporter family.

It localises to the cell inner membrane. Functionally, required for surface presentation of invasion plasmid antigens. Could play a role in preserving the translocation competence of the ipa antigens. Required for invasion and for secretion of the three ipa proteins. This is Surface presentation of antigens protein SpaS (spaS) from Shigella flexneri.